A 303-amino-acid polypeptide reads, in one-letter code: Secreted mono- and diacylglycerol lipase LIP4 (303 aa).

Residues 1–16 (MHFLAFLLCLIPLALC) form the signal peptide. Cysteine 54 and cysteine 293 are joined by a disulfide. The active-site Nucleophile is the serine 167. Residue aspartate 224 is part of the active site.

The protein belongs to the AB hydrolase superfamily. Lipase family. Class 3 subfamily.

Its subcellular location is the secreted. It carries out the reaction a monoacylglycerol + H2O = glycerol + a fatty acid + H(+). It catalyses the reaction a diacylglycerol + H2O = a monoacylglycerol + a fatty acid + H(+). Functionally, secreted lipase involved in Dandruff and seborrheic dermatitis (D/SD) probably via lipase-mediated breakdown of sebaceous lipids and release of irritating free fatty acids. Shows activity against monoglyceride and diglyceride substrates. Due to an absence of fatty acid synthase genes in Malassezia species, secretory lipases are essential for the yeast to generate free fatty acids from degradation of sebum and assimilate them as lipid sources for growth. Plays an essential role at the pathogen-host interface during disease progression. The protein is Secreted mono- and diacylglycerol lipase LIP4 of Malassezia restricta (strain ATCC 96810 / NBRC 103918 / CBS 7877) (Seborrheic dermatitis infection agent).